The sequence spans 116 residues: Aspartate 1-decarboxylase (116 aa).

Ser25 (schiff-base intermediate with substrate; via pyruvic acid) is an active-site residue. Ser25 carries the pyruvic acid (Ser) modification. Thr57 serves as a coordination point for substrate. Tyr58 functions as the Proton donor in the catalytic mechanism. A substrate-binding site is contributed by 73–75 (GAA).

This sequence belongs to the PanD family. As to quaternary structure, heterooctamer of four alpha and four beta subunits. The cofactor is pyruvate. In terms of processing, is synthesized initially as an inactive proenzyme, which is activated by self-cleavage at a specific serine bond to produce a beta-subunit with a hydroxyl group at its C-terminus and an alpha-subunit with a pyruvoyl group at its N-terminus.

The protein localises to the cytoplasm. The catalysed reaction is L-aspartate + H(+) = beta-alanine + CO2. The protein operates within cofactor biosynthesis; (R)-pantothenate biosynthesis; beta-alanine from L-aspartate: step 1/1. In terms of biological role, catalyzes the pyruvoyl-dependent decarboxylation of aspartate to produce beta-alanine. The chain is Aspartate 1-decarboxylase from Phocaeicola vulgatus (strain ATCC 8482 / DSM 1447 / JCM 5826 / CCUG 4940 / NBRC 14291 / NCTC 11154) (Bacteroides vulgatus).